Reading from the N-terminus, the 477-residue chain is Sulfate adenylyltransferase subunit 1 (477 aa).

In terms of domain architecture, tr-type G spans 22–239 (KDMLRFITCG…TVQISHDAPL (218 aa)). The tract at residues 31–38 (GSVDDGKS) is G1. 31-38 (GSVDDGKS) lines the GTP pocket. The G2 stretch occupies residues 89 to 93 (GITID). The tract at residues 110 to 113 (DCPG) is G3. Residues 110–114 (DCPGH) and 165–168 (NKMD) contribute to the GTP site. The tract at residues 165–168 (NKMD) is G4. The interval 202–204 (SAL) is G5.

The protein belongs to the TRAFAC class translation factor GTPase superfamily. Classic translation factor GTPase family. CysN/NodQ subfamily. As to quaternary structure, heterodimer composed of CysD, the smaller subunit, and CysN.

It carries out the reaction sulfate + ATP + H(+) = adenosine 5'-phosphosulfate + diphosphate. The protein operates within sulfur metabolism; hydrogen sulfide biosynthesis; sulfite from sulfate: step 1/3. In terms of biological role, with CysD forms the ATP sulfurylase (ATPS) that catalyzes the adenylation of sulfate producing adenosine 5'-phosphosulfate (APS) and diphosphate, the first enzymatic step in sulfur assimilation pathway. APS synthesis involves the formation of a high-energy phosphoric-sulfuric acid anhydride bond driven by GTP hydrolysis by CysN coupled to ATP hydrolysis by CysD. This is Sulfate adenylyltransferase subunit 1 from Chromobacterium violaceum (strain ATCC 12472 / DSM 30191 / JCM 1249 / CCUG 213 / NBRC 12614 / NCIMB 9131 / NCTC 9757 / MK).